A 227-amino-acid chain; its full sequence is MAKISKRMKSVKGLVDKQKVYALDEAIKLAKETSTTKFDSTVELSFNLNIDPRKADQQIRGALVLPAGTGKTQKVLVLTNTKVKEAQDAGADFVGGEELITKIQKENWFEFDVIVATPEMMAKLGAIGKVLGPKGLMPNPKTGTVTMDVAKAIDEIKKGKIEFRADKEGNIHTIIGKASFTAEQLKENFTTILNEMKRVKPQTVKGDYIINITISTTMGPGIKVEIN.

This sequence belongs to the universal ribosomal protein uL1 family. As to quaternary structure, part of the 50S ribosomal subunit.

In terms of biological role, binds directly to 23S rRNA. The L1 stalk is quite mobile in the ribosome, and is involved in E site tRNA release. Its function is as follows. Protein L1 is also a translational repressor protein, it controls the translation of the L11 operon by binding to its mRNA. This chain is Large ribosomal subunit protein uL1, found in Mesoplasma florum (strain ATCC 33453 / NBRC 100688 / NCTC 11704 / L1) (Acholeplasma florum).